The sequence spans 187 residues: BLOC-1-related complex subunit 8 homolog (187 aa).

Positions 165 to 187 (QSQHETANDTRQGYNDDANNDQD) are disordered.

This sequence belongs to the BORCS8 family.

Its subcellular location is the lysosome membrane. Functionally, may participate in the coupling of lysosomes to microtubule plus-end-directed kinesin motor. This Nematostella vectensis (Starlet sea anemone) protein is BLOC-1-related complex subunit 8 homolog.